Consider the following 230-residue polypeptide: uncharacterized protein (230 aa).

Residues 2–230 (IQLSNVRKSY…ASSGQRSVGE (229 aa)) form the ABC transporter domain. 38-45 (GPSGSGKS) contributes to the ATP binding site.

Belongs to the ABC transporter superfamily. In terms of assembly, part of a complex composed of YknX, YknY and YknZ. The complex interacts with YknW.

The protein localises to the cell membrane. Its function is as follows. Part of an unusual four-component transporter, which is required for protection against the killing factor SdpC (sporulation-delaying protein). This is an uncharacterized protein from Bacillus subtilis (strain 168).